The primary structure comprises 32 residues: Ranatuerin-2CSa (32 aa).

A disulfide bridge connects residues Cys27 and Cys32.

In terms of tissue distribution, expressed by the skin glands.

The protein localises to the secreted. Its subcellular location is the target cell membrane. Antibacterial peptide with amphipathic alpha-helical structure. Active against E.coli ATCC 25726 (MIC=4-5 uM) and S.aureus ATCC 25923 (MIC=8-10 uM). Has a weak hemolytic activity on human erythrocytes (LC(50)=150-160 uM). In Rana cascadae (Cascades frog), this protein is Ranatuerin-2CSa.